A 353-amino-acid polypeptide reads, in one-letter code: Photosystem II D2 protein (353 aa).

Thr2 is modified (N-acetylthreonine). The residue at position 2 (Thr2) is a Phosphothreonine. The helical transmembrane segment at 41-61 (CAYFALGGWFTGTTFVTSWYT) threads the bilayer. His118 serves as a coordination point for chlorophyll a. Residues 125 to 141 (GFMLRQFELARSVQLRP) traverse the membrane as a helical segment. Residues Gln130 and Asn143 each coordinate pheophytin a. A helical membrane pass occupies residues 153–166 (VFVSVFLIYPLGQS). His198 lines the chlorophyll a pocket. The chain crosses the membrane as a helical span at residues 208–228 (AALLCAIHGATVENTLFEDGD). 2 residues coordinate a plastoquinone: His215 and Phe262. Position 215 (His215) interacts with Fe cation. Position 269 (His269) interacts with Fe cation. The chain crosses the membrane as a helical span at residues 279–295 (GLWMSAIGVVGLALNLR).

This sequence belongs to the reaction center PufL/M/PsbA/D family. In terms of assembly, PSII is composed of 1 copy each of membrane proteins PsbA, PsbB, PsbC, PsbD, PsbE, PsbF, PsbH, PsbI, PsbJ, PsbK, PsbL, PsbM, PsbT, PsbX, PsbY, PsbZ, Psb30/Ycf12, at least 3 peripheral proteins of the oxygen-evolving complex and a large number of cofactors. It forms dimeric complexes. The D1/D2 heterodimer binds P680, chlorophylls that are the primary electron donor of PSII, and subsequent electron acceptors. It shares a non-heme iron and each subunit binds pheophytin, quinone, additional chlorophylls, carotenoids and lipids. There is also a Cl(-1) ion associated with D1 and D2, which is required for oxygen evolution. The PSII complex binds additional chlorophylls, carotenoids and specific lipids. serves as cofactor.

It is found in the plastid. Its subcellular location is the chloroplast thylakoid membrane. It catalyses the reaction 2 a plastoquinone + 4 hnu + 2 H2O = 2 a plastoquinol + O2. Photosystem II (PSII) is a light-driven water:plastoquinone oxidoreductase that uses light energy to abstract electrons from H(2)O, generating O(2) and a proton gradient subsequently used for ATP formation. It consists of a core antenna complex that captures photons, and an electron transfer chain that converts photonic excitation into a charge separation. The D1/D2 (PsbA/PsbD) reaction center heterodimer binds P680, the primary electron donor of PSII as well as several subsequent electron acceptors. D2 is needed for assembly of a stable PSII complex. The protein is Photosystem II D2 protein of Oryza nivara (Indian wild rice).